The primary structure comprises 302 residues: Probable 5-dehydro-4-deoxyglucarate dehydratase (302 aa).

Belongs to the DapA family.

It carries out the reaction 5-dehydro-4-deoxy-D-glucarate + H(+) = 2,5-dioxopentanoate + CO2 + H2O. The protein operates within carbohydrate acid metabolism; D-glucarate degradation; 2,5-dioxopentanoate from D-glucarate: step 2/2. In Rhizobium rhizogenes (strain K84 / ATCC BAA-868) (Agrobacterium radiobacter), this protein is Probable 5-dehydro-4-deoxyglucarate dehydratase.